A 528-amino-acid polypeptide reads, in one-letter code: Protein MGF 505-7R (528 aa).

ANK repeat units follow at residues 54–83 (SIND…NLHY), 129–158 (GCDL…LLNV), 261–290 (SVKR…IPRG), 292–321 (IERL…YKVK), and 322–352 (NVKK…LLDA).

This sequence belongs to the asfivirus MGF 505 family. As to quaternary structure, interacts with host STING1. Interacts with host JAK1; this interaction leads to JAK1 degradation. Interacts with host JAK2; this interaction leads to JAK2 degradation. Interacts with host RELA; this interaction inhibits NF-kappa-B promoter activity.

The protein localises to the host cytoplasm. Functionally, plays a role in virus cell tropism, and may be required for efficient virus replication in macrophages. Interferes with host NF-kappa-B promoter activity mediated by TLR8. Mechanistically, inhibits the phosphorylation and subsequent nuclear translocation of host NF-kappa-B RELA subunit downstream of TLR8. Promotes the expression of the autophagy-related protein host ULK1 to degrade host STING and inhibit the interferon response. Inhibits also JAK1- and JAK2-mediated signaling and thus negatively regulates the IFN-gamma signaling. This is Protein MGF 505-7R from African swine fever virus (strain Badajoz 1971 Vero-adapted) (Ba71V).